The sequence spans 337 residues: Putative 2-aminoethylphosphonate-binding periplasmic protein (337 aa).

A signal peptide spans methionine 1 to alanine 21.

This sequence belongs to the bacterial solute-binding protein 1 family.

It localises to the periplasm. Probably part of the PhnSTUV complex (TC 3.A.1.11.5) involved in 2-aminoethylphosphonate import. This Salmonella typhi protein is Putative 2-aminoethylphosphonate-binding periplasmic protein (phnS).